A 310-amino-acid chain; its full sequence is Olfactory receptor 5P53 (310 aa).

Residues 1–25 (MEAENHTTVAELIILGLTEDPKLCI) are Extracellular-facing. N5 carries an N-linked (GlcNAc...) asparagine glycan. Residues 26 to 46 (VFFVIFLGVYIVTLVGNISII) form a helical membrane-spanning segment. At 47–54 (TLIRISSQ) the chain is on the cytoplasmic side. Residues 55 to 75 (LHTPMYLFLSHLAFVDILYST) form a helical membrane-spanning segment. Residues 76–99 (SVSVIMHMELLGHGLALPVAACAA) lie on the Extracellular side of the membrane. Cysteines 97 and 189 form a disulfide. The chain crosses the membrane as a helical span at residues 100–120 (QLCITVSFGSAECFLLAAMAY). Over 121–133 (DRYVAICSPLLYS) the chain is Cytoplasmic. A helical membrane pass occupies residues 134-154 (TLMSPRVCFLLLGMSYVGGCM). The Extracellular portion of the chain corresponds to 155-196 (NGWTFTGCLLSLSFCGPNQIDHFFCDFSPLLKLSCSDVSIIG). Residues 197–217 (IIPSISSGSIIVVTVFVIAVS) traverse the membrane as a helical segment. Residues 218 to 237 (YIYILITILNMRSTEGRHKA) lie on the Cytoplasmic side of the membrane. Residues 238–258 (FSTCTSHLTAVTLYYGTITFI) traverse the membrane as a helical segment. Over 259-271 (YVMPKSNYSTEQN) the chain is Extracellular. A glycan (N-linked (GlcNAc...) asparagine) is linked at N265. A helical transmembrane segment spans residues 272 to 292 (KVLSVFYTVVIPMLNPLIYSL). The Cytoplasmic segment spans residues 293-310 (RNRDVKEALRKATVRVYS).

This sequence belongs to the G-protein coupled receptor 1 family.

It is found in the cell membrane. Its function is as follows. Potential odorant receptor. This chain is Olfactory receptor 5P53, found in Mus musculus (Mouse).